The sequence spans 168 residues: mRNA stability protein IGO1 (168 aa).

Positions 1–13 (MSNENLSPNSSNP) are enriched in low complexity. The segment at 1-31 (MSNENLSPNSSNPDLTKLNNGESGTIDTSKF) is disordered. A compositionally biased stretch (polar residues) spans 17 to 31 (KLNNGESGTIDTSKF). Phosphoserine occurs at positions 32 and 64. The disordered stretch occupies residues 125–168 (KEGSISSGPPSSNNGTIGGGSTSSTPVGNHSSSSSSLYTESPIR). 2 stretches are compositionally biased toward low complexity: residues 127-139 (GSIS…SNNG) and 146-168 (TSST…SPIR).

The protein belongs to the endosulfine family. As to quaternary structure, interacts with RIM15, DHH1, PBP1, PBP4 and LSM12. Post-translationally, phosphorylated at Ser-64 by RIM15.

Functionally, required for TORC1 to properly control gene expression and chronological life span. Plays an essential role in initiation of the G0 program by preventing the degradation of specific nutrient-regulated mRNAs via the 5'-3' mRNA decay pathway. This is mRNA stability protein IGO1 (IGO1) from Saccharomyces cerevisiae (strain ATCC 204508 / S288c) (Baker's yeast).